The primary structure comprises 334 residues: Phosphate acyltransferase (334 aa).

This sequence belongs to the PlsX family. Homodimer. Probably interacts with PlsY.

It is found in the cytoplasm. The catalysed reaction is a fatty acyl-[ACP] + phosphate = an acyl phosphate + holo-[ACP]. The protein operates within lipid metabolism; phospholipid metabolism. Its function is as follows. Catalyzes the reversible formation of acyl-phosphate (acyl-PO(4)) from acyl-[acyl-carrier-protein] (acyl-ACP). This enzyme utilizes acyl-ACP as fatty acyl donor, but not acyl-CoA. This chain is Phosphate acyltransferase, found in Thermotoga petrophila (strain ATCC BAA-488 / DSM 13995 / JCM 10881 / RKU-1).